A 362-amino-acid polypeptide reads, in one-letter code: Dual-specificity RNA methyltransferase RlmN (362 aa).

Glutamate 100 functions as the Proton acceptor in the catalytic mechanism. A Radical SAM core domain is found at 106–345 (EPDRNTLCIS…VFIRNSRGED (240 aa)). Cysteine 113 and cysteine 350 are joined by a disulfide. Cysteine 120, cysteine 124, and cysteine 127 together coordinate [4Fe-4S] cluster. Residues 177–178 (GE), serine 209, 231–233 (SLH), and asparagine 307 each bind S-adenosyl-L-methionine. Catalysis depends on cysteine 350, which acts as the S-methylcysteine intermediate.

This sequence belongs to the radical SAM superfamily. RlmN family. [4Fe-4S] cluster is required as a cofactor.

Its subcellular location is the cytoplasm. It catalyses the reaction adenosine(2503) in 23S rRNA + 2 reduced [2Fe-2S]-[ferredoxin] + 2 S-adenosyl-L-methionine = 2-methyladenosine(2503) in 23S rRNA + 5'-deoxyadenosine + L-methionine + 2 oxidized [2Fe-2S]-[ferredoxin] + S-adenosyl-L-homocysteine. The enzyme catalyses adenosine(37) in tRNA + 2 reduced [2Fe-2S]-[ferredoxin] + 2 S-adenosyl-L-methionine = 2-methyladenosine(37) in tRNA + 5'-deoxyadenosine + L-methionine + 2 oxidized [2Fe-2S]-[ferredoxin] + S-adenosyl-L-homocysteine. Specifically methylates position 2 of adenine 2503 in 23S rRNA and position 2 of adenine 37 in tRNAs. m2A2503 modification seems to play a crucial role in the proofreading step occurring at the peptidyl transferase center and thus would serve to optimize ribosomal fidelity. In Desulfotalea psychrophila (strain LSv54 / DSM 12343), this protein is Dual-specificity RNA methyltransferase RlmN.